The sequence spans 120 residues: Large ribosomal subunit protein uL18 (120 aa).

Belongs to the universal ribosomal protein uL18 family. Part of the 50S ribosomal subunit; part of the 5S rRNA/L5/L18/L25 subcomplex. Contacts the 5S and 23S rRNAs.

In terms of biological role, this is one of the proteins that bind and probably mediate the attachment of the 5S RNA into the large ribosomal subunit, where it forms part of the central protuberance. The polypeptide is Large ribosomal subunit protein uL18 (Brucella suis biovar 1 (strain 1330)).